A 466-amino-acid polypeptide reads, in one-letter code: UDP-N-acetylmuramoylalanine--D-glutamate ligase (466 aa).

122 to 128 serves as a coordination point for ATP; sequence GTNGKTT.

It belongs to the MurCDEF family.

It localises to the cytoplasm. The catalysed reaction is UDP-N-acetyl-alpha-D-muramoyl-L-alanine + D-glutamate + ATP = UDP-N-acetyl-alpha-D-muramoyl-L-alanyl-D-glutamate + ADP + phosphate + H(+). The protein operates within cell wall biogenesis; peptidoglycan biosynthesis. Functionally, cell wall formation. Catalyzes the addition of glutamate to the nucleotide precursor UDP-N-acetylmuramoyl-L-alanine (UMA). The polypeptide is UDP-N-acetylmuramoylalanine--D-glutamate ligase (Aromatoleum aromaticum (strain DSM 19018 / LMG 30748 / EbN1) (Azoarcus sp. (strain EbN1))).